Here is a 380-residue protein sequence, read N- to C-terminus: Cytosolic acyl coenzyme A thioester hydrolase (380 aa).

One can recognise a HotDog ACOT-type 1 domain in the interval 50–168 (PCGACITGRI…TLWYVPLSLK (119 aa)). N66 is a catalytic residue. An N6-acetyllysine mark is found at K168 and K198. The HotDog ACOT-type 2 domain maps to 224-338 (SYSQSSLIHL…FFTYVSLSQE (115 aa)). D255 is an active-site residue. K283 is modified (N6-acetyllysine). Residues 350–380 (ETEDEKKRFEEGKGRYLQMKAKRQGHAEPQP) form a disordered region. The segment covering 353-363 (DEKKRFEEGKG) has biased composition (basic and acidic residues).

In terms of assembly, homohexamer. In terms of tissue distribution, isoform 4 is expressed exclusively in brain.

It is found in the cytoplasm. The protein resides in the cytosol. Its subcellular location is the mitochondrion. It catalyses the reaction hexadecanoyl-CoA + H2O = hexadecanoate + CoA + H(+). It carries out the reaction octanoyl-CoA + H2O = octanoate + CoA + H(+). The catalysed reaction is dodecanoyl-CoA + H2O = dodecanoate + CoA + H(+). The enzyme catalyses (9Z)-octadecenoyl-CoA + H2O = (9Z)-octadecenoate + CoA + H(+). It catalyses the reaction tetradecanoyl-CoA + H2O = tetradecanoate + CoA + H(+). It carries out the reaction decanoyl-CoA + H2O = decanoate + CoA + H(+). The catalysed reaction is octadecanoyl-CoA + H2O = octadecanoate + CoA + H(+). It functions in the pathway lipid metabolism; fatty acid metabolism. Catalyzes the hydrolysis of acyl-CoAs into free fatty acids and coenzyme A (CoASH), regulating their respective intracellular levels. Preferentially hydrolyzes palmitoyl-CoA, but has a broad specificity acting on other fatty acyl-CoAs with chain-lengths of C8-C18. May play an important physiological function in brain. The polypeptide is Cytosolic acyl coenzyme A thioester hydrolase (ACOT7) (Homo sapiens (Human)).